Consider the following 471-residue polypeptide: Argininosuccinate lyase (471 aa).

The protein belongs to the lyase 1 family. Argininosuccinate lyase subfamily.

The protein localises to the cytoplasm. It catalyses the reaction 2-(N(omega)-L-arginino)succinate = fumarate + L-arginine. It functions in the pathway amino-acid biosynthesis; L-arginine biosynthesis; L-arginine from L-ornithine and carbamoyl phosphate: step 3/3. This Ehrlichia canis (strain Jake) protein is Argininosuccinate lyase.